A 382-amino-acid chain; its full sequence is Rubredoxin-NAD(+) reductase (382 aa).

FAD is bound by residues 9–12 (TGLA), 33–34 (TA), K42, V80, E156, D275, V287, and K318.

This sequence belongs to the FAD-dependent oxidoreductase family. In terms of assembly, homodimer. Requires FAD as cofactor.

The protein resides in the cytoplasm. It carries out the reaction 2 reduced [rubredoxin] + NAD(+) + H(+) = 2 oxidized [rubredoxin] + NADH. It participates in hydrocarbon metabolism; alkane degradation. In terms of biological role, involved in the hydrocarbon hydroxylating system, which transfers electrons from NADH to rubredoxin reductase and then through rubredoxin to alkane 1 monooxygenase. The sequence is that of Rubredoxin-NAD(+) reductase (rubB) from Alcanivorax borkumensis (strain ATCC 700651 / DSM 11573 / NCIMB 13689 / SK2).